The following is a 249-amino-acid chain: Ribosomal RNA small subunit methyltransferase G (249 aa).

G86, F91, and R178 together coordinate S-adenosyl-L-methionine.

The protein belongs to the methyltransferase superfamily. RNA methyltransferase RsmG family.

It is found in the cytoplasm. Its function is as follows. Specifically methylates the N7 position of a guanine in 16S rRNA. The chain is Ribosomal RNA small subunit methyltransferase G from Bifidobacterium adolescentis (strain ATCC 15703 / DSM 20083 / NCTC 11814 / E194a).